Here is a 121-residue protein sequence, read N- to C-terminus: Ribosome-binding factor A (121 aa).

It belongs to the RbfA family. In terms of assembly, monomer. Binds 30S ribosomal subunits, but not 50S ribosomal subunits or 70S ribosomes.

It localises to the cytoplasm. In terms of biological role, one of several proteins that assist in the late maturation steps of the functional core of the 30S ribosomal subunit. Associates with free 30S ribosomal subunits (but not with 30S subunits that are part of 70S ribosomes or polysomes). Required for efficient processing of 16S rRNA. May interact with the 5'-terminal helix region of 16S rRNA. The chain is Ribosome-binding factor A from Paraburkholderia xenovorans (strain LB400).